Reading from the N-terminus, the 263-residue chain is Proenkephalin-A (263 aa).

Positions 1 to 24 (MARFLGLCTWLLALGPGLLATVRA) are cleaved as a signal peptide. 3 disulfides stabilise this stretch: Cys26–Cys48, Cys30–Cys52, and Cys33–Cys65. 2 consecutive propeptides follow at residues 192 to 203 (SPHLEDETKELQ) and 213 to 223 (VGRPEWWMDYQ). Ser247 carries the post-translational modification Phosphoserine.

It belongs to the opioid neuropeptide precursor family. In terms of processing, proenkephalin-A is cleaved by CTSL to generate Met-enkephalin. Post-translationally, processed and degraded by ACE. Probably cleaved by ACE. In terms of processing, processed by ACE to generate Met-enkephalin in the nucleus accumbens of the brain. Post-translationally, the N-terminal domain contains 6 conserved cysteines thought to be involved in disulfide bonding and/or processing. As to expression, secreted by neuroendocrine chromaffin cells through cromaffin granules.

The protein localises to the cytoplasmic vesicle. It localises to the secretory vesicle. Its subcellular location is the chromaffin granule lumen. It is found in the secreted. Functionally, neuropeptide that competes with and mimic the effects of opiate drugs. They play a role in a number of physiologic functions, including pain perception and responses to stress. In terms of biological role, met-enkephalin-Arg-Phe neuropeptide acts as a strong ligand of Mu-type opioid receptor OPRM1. Met-enkephalin-Arg-Phe-binding to OPRM1 in the nucleus accumbens of the brain increases activation of OPRM1, leading to long-term synaptic depression of glutamate release. Its function is as follows. Increases glutamate release in the striatum and decreases GABA concentration in the striatum. Increases glutamate release in the striatum. Functionally, enkelytin possesses antibacterial activity against Gram-positive bacteria such as Micrococcus luteus and Bacillus megaterium. The polypeptide is Proenkephalin-A (PENK) (Bos taurus (Bovine)).